The primary structure comprises 142 residues: FAD synthase (142 aa).

Residues 9-10, 14-17, and Asp92 each bind ATP; these read TF and HPGH.

It belongs to the archaeal FAD synthase family. In terms of assembly, homodimer. A divalent metal cation serves as cofactor.

The catalysed reaction is FMN + ATP + H(+) = FAD + diphosphate. It functions in the pathway cofactor biosynthesis; FAD biosynthesis; FAD from FMN: step 1/1. Catalyzes the transfer of the AMP portion of ATP to flavin mononucleotide (FMN) to produce flavin adenine dinucleotide (FAD) coenzyme. In Methanohalophilus mahii (strain ATCC 35705 / DSM 5219 / SLP), this protein is FAD synthase.